We begin with the raw amino-acid sequence, 216 residues long: Elongation factor 1-beta (216 aa).

The interval 71 to 131 (GQASGVSASS…AKKKESGKSS (61 aa)) is disordered. The segment covering 73 to 89 (ASGVSASSAPAAAAPAA) has biased composition (low complexity). Acidic residues predominate over residues 92–107 (DEDDDDDMDLFGDETE). Over residues 108-128 (EDKKAAAEREAAKPAKKKESG) the composition is skewed to basic and acidic residues.

The protein belongs to the EF-1-beta/EF-1-delta family. In terms of assembly, EF-1 is composed of 4 subunits: alpha, beta (1B-alpha=beta'), delta (1B-beta), and gamma (1B-gamma).

In terms of biological role, EF-1-beta and EF-1-beta' stimulate the exchange of GDP bound to EF-1-alpha to GTP. This chain is Elongation factor 1-beta, found in Triticum aestivum (Wheat).